Consider the following 232-residue polypeptide: UPF0758 protein Amet_2289 (232 aa).

An MPN domain is found at 110-232; it reads RIKSPDDVSN…YYSLKEKSMM (123 aa). Zn(2+) contacts are provided by His-181, His-183, and Asp-194. Positions 181 to 194 match the JAMM motif motif; the sequence is HNHPSGDPSPSGED.

The protein belongs to the UPF0758 family.

The polypeptide is UPF0758 protein Amet_2289 (Alkaliphilus metalliredigens (strain QYMF)).